The sequence spans 323 residues: MYHNSSQKRHWTFSSEEQLARLRADANRKFRCKAVANGKVLPNDPVFLEPHEEMTLCKYYEKRLLEFCSVFKPAMPRSVVGTACMYFKRFYLNNSVMEYHPRIIMLTCAFLACKVDEFNVSSPQFVGNLRESPLGQEKALEQILEYELLLIQQLNFHLIVHNPYRPFEGFLIDLKTRYPILENPEILRKTADDFLNRIALTDAYLLYTPSQIALTAILSSASRAGITMESYLSESLMLKENRTCLSQLLDIMKSMRNLVKKYEPPRSEEVAVLKQKLERCHSAELALNVITKKRKGYEDDDYVSKKSKHEEEEWTDDDLVESL.

Serine 5 is subject to Phosphoserine; by CDK8. Serine 132 is subject to Phosphoserine. A disordered region spans residues 297-323; sequence YEDDDYVSKKSKHEEEEWTDDDLVESL. The segment covering 302-311 has biased composition (basic and acidic residues); that stretch reads YVSKKSKHEE. The residue at position 304 (serine 304) is a Phosphoserine; by CDK8. Positions 312-323 are enriched in acidic residues; that stretch reads EEWTDDDLVESL. A Phosphothreonine modification is found at threonine 315. Serine 322 carries the phosphoserine modification.

Belongs to the cyclin family. Cyclin C subfamily. In terms of assembly, associates primarily with CDK7 and MAT1 to form the CAK complex. CAK can further associate with the core-TFIIH to form the TFIIH basal transcription factor.

Its subcellular location is the nucleus. Functionally, regulates CDK7, the catalytic subunit of the CDK-activating kinase (CAK) enzymatic complex. CAK activates the cyclin-associated kinases CDK1, CDK2, CDK4 and CDK6 by threonine phosphorylation. CAK complexed to the core-TFIIH basal transcription factor activates RNA polymerase II by serine phosphorylation of the repetitive C-terminal domain (CTD) of its large subunit (POLR2A), allowing its escape from the promoter and elongation of the transcripts. Involved in cell cycle control and in RNA transcription by RNA polymerase II. Its expression and activity are constant throughout the cell cycle. The sequence is that of Cyclin-H (CCNH) from Homo sapiens (Human).